The following is a 235-amino-acid chain: Sperm-associated microtubule inner protein 5 (235 aa).

Microtubule inner protein component of sperm flagellar doublet microtubules. In terms of tissue distribution, expressed in sperm.

The protein resides in the cytoplasm. Its subcellular location is the cytoskeleton. It localises to the flagellum axoneme. The protein localises to the nucleus. In terms of biological role, microtubule inner protein (MIP) part of the dynein-decorated doublet microtubules (DMTs) in flagellum axoneme. May serve to reinforce and thus stabilize the microtubule structure in the sperm flagella. This Bos taurus (Bovine) protein is Sperm-associated microtubule inner protein 5 (SPMIP5).